A 424-amino-acid chain; its full sequence is Histidine--tRNA ligase (424 aa).

This sequence belongs to the class-II aminoacyl-tRNA synthetase family. Homodimer.

The protein resides in the cytoplasm. It catalyses the reaction tRNA(His) + L-histidine + ATP = L-histidyl-tRNA(His) + AMP + diphosphate + H(+). This is Histidine--tRNA ligase from Salmonella agona (strain SL483).